A 172-amino-acid chain; its full sequence is Nascent polypeptide-associated complex subunit beta (172 aa).

Disordered regions lie at residues 36–58 (KTGK…GDDK) and 142–172 (QNMQ…DKVE). A compositionally biased stretch (basic residues) spans 41–50 (TPRRKMKRAP). Residues 54 to 119 (GGDDKKLQQT…GEDKELTELV (66 aa)) form the NAC-A/B domain.

It belongs to the NAC-beta family. Part of the nascent polypeptide-associated complex (NAC), consisting of EGD2 and EGD1. NAC associates with ribosomes via EGD1.

It is found in the cytoplasm. The protein localises to the nucleus. Component of the nascent polypeptide-associated complex (NAC), a dynamic component of the ribosomal exit tunnel, protecting the emerging polypeptides from interaction with other cytoplasmic proteins to ensure appropriate nascent protein targeting. The NAC complex also promotes mitochondrial protein import by enhancing productive ribosome interactions with the outer mitochondrial membrane and blocks the inappropriate interaction of ribosomes translating non-secretory nascent polypeptides with translocation sites in the membrane of the endoplasmic reticulum. EGD1 may act as a transcription factor that exert a negative effect on the expression of several genes that are transcribed by RNA polymerase II. The protein is Nascent polypeptide-associated complex subunit beta (EGD1) of Pyricularia oryzae (strain 70-15 / ATCC MYA-4617 / FGSC 8958) (Rice blast fungus).